The following is a 92-amino-acid chain: Ribonuclease P protein component 1 (92 aa).

The protein belongs to the eukaryotic/archaeal RNase P protein component 1 family. As to quaternary structure, consists of a catalytic RNA component and at least 4-5 protein subunits.

The protein resides in the cytoplasm. It carries out the reaction Endonucleolytic cleavage of RNA, removing 5'-extranucleotides from tRNA precursor.. Part of ribonuclease P, a protein complex that generates mature tRNA molecules by cleaving their 5'-ends. This chain is Ribonuclease P protein component 1, found in Staphylothermus marinus (strain ATCC 43588 / DSM 3639 / JCM 9404 / F1).